The sequence spans 812 residues: 5-methyltetrahydropteroyltriglutamate--homocysteine methyltransferase 3, chloroplastic (812 aa).

The N-terminal 33 residues, 1 to 33 (MGQLALQRLQPLASLPRRPPSLPPPSSATPSLP), are a transit peptide targeting the chloroplast. Positions 13-33 (ASLPRRPPSLPPPSSATPSLP) are disordered. Positions 17–27 (RRPPSLPPPSS) are enriched in pro residues. The 5-methyltetrahydropteroyltri-L-glutamate site is built by Lys-66 and Asn-164. The disordered stretch occupies residues 430-456 (MRQASRRSSPRVTNAAVQQDVDAVKKS). L-homocysteine contacts are provided by residues 485-487 (IGS) and Glu-538. Residues 485–487 (IGS) and Glu-538 each bind L-methionine. 5-methyltetrahydropteroyltri-L-glutamate is bound by residues Asp-543, Tyr-566, 569 to 570 (RC), and Trp-615. Asp-653 contacts L-homocysteine. Asp-653 serves as a coordination point for L-methionine. 5 residues coordinate Zn(2+): His-695, Cys-697, His-706, Asp-710, and Glu-719. His-749 functions as the Proton donor in the catalytic mechanism. Residue Cys-781 coordinates Zn(2+).

It belongs to the vitamin-B12 independent methionine synthase family. Zn(2+) is required as a cofactor. As to expression, expressed in seeds.

Its subcellular location is the plastid. The protein localises to the chloroplast. It catalyses the reaction 5-methyltetrahydropteroyltri-L-glutamate + L-homocysteine = tetrahydropteroyltri-L-glutamate + L-methionine. It participates in amino-acid biosynthesis; L-methionine biosynthesis via de novo pathway; L-methionine from L-homocysteine (MetE route): step 1/1. In terms of biological role, catalyzes the transfer of a methyl group from 5-methyltetrahydrofolate to homocysteine resulting in methionine formation. In Arabidopsis thaliana (Mouse-ear cress), this protein is 5-methyltetrahydropteroyltriglutamate--homocysteine methyltransferase 3, chloroplastic (MS3).